We begin with the raw amino-acid sequence, 157 residues long: Serine-protein kinase RsbW (157 aa).

The protein belongs to the anti-sigma-factor family.

The enzyme catalyses L-seryl-[protein] + ATP = O-phospho-L-seryl-[protein] + ADP + H(+). The catalysed reaction is L-threonyl-[protein] + ATP = O-phospho-L-threonyl-[protein] + ADP + H(+). Negative regulator of sigma-B activity. Phosphorylates and inactivates its specific antagonist protein, RsbV. Upon phosphorylation of RsbV, RsbW is released and binds to sigma-B, thereby blocking its ability to form an RNA polymerase holoenzyme (E-sigma-B). In Listeria monocytogenes serotype 4b (strain CLIP80459), this protein is Serine-protein kinase RsbW.